Here is a 157-residue protein sequence, read N- to C-terminus: Mediator of RNA polymerase II transcription subunit 10 (157 aa).

Belongs to the Mediator complex subunit 10 family. As to quaternary structure, component of the Mediator complex, which is composed of at least 21 subunits that form three structurally distinct submodules. The Mediator head module contains MED6, MED8, MED11, SRB4/MED17, SRB5/MED18, ROX3/MED19, SRB2/MED20 and SRB6/MED22, the middle module contains MED1, MED4, NUT1/MED5, MED7, CSE2/MED9, NUT2/MED10, SRB7/MED21 and SOH1/MED31, and the tail module contains MED2, PGD1/MED3, RGR1/MED14, GAL11/MED15 and SIN4/MED16. The head and the middle modules interact directly with RNA polymerase II, whereas the elongated tail module interacts with gene-specific regulatory proteins. NUT2/MED10 interacts directly with SRB7/MED21.

The protein resides in the nucleus. In terms of biological role, component of the Mediator complex, a coactivator involved in the regulated transcription of nearly all RNA polymerase II-dependent genes. Mediator functions as a bridge to convey information from gene-specific regulatory proteins to the basal RNA polymerase II transcription machinery. The Mediator complex, having a compact conformation in its free form, is recruited to promoters by direct interactions with regulatory proteins and serves for the assembly of a functional preinitiation complex with RNA polymerase II and the general transcription factors. The Mediator complex unfolds to an extended conformation and partially surrounds RNA polymerase II, specifically interacting with the unphosphorylated form of the C-terminal domain (CTD) of RNA polymerase II. The Mediator complex dissociates from the RNA polymerase II holoenzyme and stays at the promoter when transcriptional elongation begins. The sequence is that of Mediator of RNA polymerase II transcription subunit 10 (NUT2) from Saccharomyces cerevisiae (strain ATCC 204508 / S288c) (Baker's yeast).